A 274-amino-acid polypeptide reads, in one-letter code: Kit ligand (274 aa).

A signal peptide spans 1–25 (MKKTQTWIITCIYLQLLLFNPLVKT). Residues 26–215 (KGICGKRVTD…SNSIGDSNLQ (190 aa)) lie on the Extracellular side of the membrane. Disulfide bonds link Cys-29–Cys-114 and Cys-68–Cys-164. Asn-90, Asn-97, Asn-145, and Asn-196 each carry an N-linked (GlcNAc...) asparagine glycan. Residues 216 to 238 (WAAMALPAFFSLVIGFAFGALYW) traverse the membrane as a helical segment. At 239-274 (KKKQPNLTRTVENIQINEEDNEISMLQEKEREFQEV) the chain is on the cytoplasmic side.

This sequence belongs to the SCF family. As to quaternary structure, homodimer, non-covalently linked. Post-translationally, a soluble form is produced by proteolytic processing of the extracellular domain.

Its subcellular location is the cytoplasm. The protein localises to the cytoskeleton. It is found in the cell membrane. The protein resides in the cell projection. It localises to the lamellipodium. Its subcellular location is the filopodium. The protein localises to the secreted. Its function is as follows. Stimulates the proliferation of mast cells. Able to augment the proliferation of both myeloid and lymphoid hematopoietic progenitors in bone marrow culture. Also mediates cell-cell adhesion. Acts synergistically with other cytokines, probably interleukins. The sequence is that of Kit ligand (KITLG) from Canis lupus familiaris (Dog).